A 228-amino-acid polypeptide reads, in one-letter code: Leucyl/phenylalanyl-tRNA--protein transferase (228 aa).

The protein belongs to the L/F-transferase family.

Its subcellular location is the cytoplasm. It catalyses the reaction N-terminal L-lysyl-[protein] + L-leucyl-tRNA(Leu) = N-terminal L-leucyl-L-lysyl-[protein] + tRNA(Leu) + H(+). The catalysed reaction is N-terminal L-arginyl-[protein] + L-leucyl-tRNA(Leu) = N-terminal L-leucyl-L-arginyl-[protein] + tRNA(Leu) + H(+). It carries out the reaction L-phenylalanyl-tRNA(Phe) + an N-terminal L-alpha-aminoacyl-[protein] = an N-terminal L-phenylalanyl-L-alpha-aminoacyl-[protein] + tRNA(Phe). Its function is as follows. Functions in the N-end rule pathway of protein degradation where it conjugates Leu, Phe and, less efficiently, Met from aminoacyl-tRNAs to the N-termini of proteins containing an N-terminal arginine or lysine. This Thiobacillus denitrificans (strain ATCC 25259 / T1) protein is Leucyl/phenylalanyl-tRNA--protein transferase.